The following is a 368-amino-acid chain: 2-aminoethylphosphonate--pyruvate transaminase (368 aa).

Lysine 192 carries the N6-(pyridoxal phosphate)lysine modification.

The protein belongs to the class-V pyridoxal-phosphate-dependent aminotransferase family. PhnW subfamily. As to quaternary structure, homodimer. The cofactor is pyridoxal 5'-phosphate.

It catalyses the reaction (2-aminoethyl)phosphonate + pyruvate = phosphonoacetaldehyde + L-alanine. Its function is as follows. Involved in phosphonate degradation. In Pseudomonas entomophila (strain L48), this protein is 2-aminoethylphosphonate--pyruvate transaminase.